We begin with the raw amino-acid sequence, 309 residues long: Cytochrome c1, heme protein, mitochondrial (309 aa).

The transit peptide at 1 to 61 directs the protein to the mitochondrion; the sequence is MFSNLSKRWA…LYADSLTAEA (61 aa). Over 62–262 the chain is Mitochondrial intermembrane; sequence MTAAEHGLHA…TFLNWCAEPE (201 aa). Positions 88-241 constitute a Cytochrome c domain; it reads ASIRRGYQVY…DMVEYEDGTP (154 aa). 3 residues coordinate heme c: Cys101, Cys104, and His105. Residues 131-140 are compositionally biased toward acidic residues; sequence EFEYDDEPDE. The tract at residues 131-168 is disordered; that stretch reads EFEYDDEPDEQGNPKKRPGKLSDYIPGPYPNEQAARAA. Met225 provides a ligand contact to heme c. A helical membrane pass occupies residues 263–296; that stretch reads HDERKRLGLKTVIILSSLYLLSIWVKKFKWAGIK. Residues 297 to 309 lie on the Mitochondrial matrix side of the membrane; that stretch reads TRKFVFNPPKPRK.

This sequence belongs to the cytochrome c family. As to quaternary structure, component of the ubiquinol-cytochrome c oxidoreductase (cytochrome b-c1 complex, complex III, CIII), a multisubunit enzyme composed of 10 subunits. The complex is composed of 3 respiratory subunits cytochrome b (COB), cytochrome c1 (CYT1) and Rieske protein (RIP1), 2 core protein subunits COR1 and QCR2, and 5 low-molecular weight protein subunits QCR6, QCR7, QCR8, QCR9 and QCR10. The complex exists as an obligatory dimer and forms supercomplexes (SCs) in the inner mitochondrial membrane with a monomer or a dimer of cytochrome c oxidase (complex IV, CIV), resulting in 2 different assemblies (supercomplexes III(2)IV and III(2)IV(2)). CYT1 interacts with COX5A at the CIII-CIV interface. Requires heme c as cofactor.

The protein localises to the mitochondrion inner membrane. It catalyses the reaction a quinol + 2 Fe(III)-[cytochrome c](out) = a quinone + 2 Fe(II)-[cytochrome c](out) + 2 H(+)(out). In terms of biological role, component of the ubiquinol-cytochrome c oxidoreductase, a multisubunit transmembrane complex that is part of the mitochondrial electron transport chain which drives oxidative phosphorylation. The respiratory chain contains 3 multisubunit complexes succinate dehydrogenase (complex II, CII), ubiquinol-cytochrome c oxidoreductase (cytochrome b-c1 complex, complex III, CIII) and cytochrome c oxidase (complex IV, CIV), that cooperate to transfer electrons derived from NADH and succinate to molecular oxygen, creating an electrochemical gradient over the inner membrane that drives transmembrane transport and the ATP synthase. The cytochrome b-c1 complex catalyzes electron transfer from ubiquinol to cytochrome c, linking this redox reaction to translocation of protons across the mitochondrial inner membrane, with protons being carried across the membrane as hydrogens on the quinol. In the process called Q cycle, 2 protons are consumed from the matrix, 4 protons are released into the intermembrane space and 2 electrons are passed to cytochrome c. Cytochrome c1 is a catalytic core subunit containing a c-type heme. It transfers electrons from the [2Fe-2S] iron-sulfur cluster of the Rieske protein to cytochrome c. This chain is Cytochrome c1, heme protein, mitochondrial (CYT1), found in Saccharomyces cerevisiae (strain ATCC 204508 / S288c) (Baker's yeast).